Consider the following 264-residue polypeptide: tRNA (guanine-N(1)-)-methyltransferase (264 aa).

S-adenosyl-L-methionine-binding positions include G125 and L145 to L150.

The protein belongs to the RNA methyltransferase TrmD family. Homodimer.

The protein resides in the cytoplasm. The enzyme catalyses guanosine(37) in tRNA + S-adenosyl-L-methionine = N(1)-methylguanosine(37) in tRNA + S-adenosyl-L-homocysteine + H(+). Its function is as follows. Specifically methylates guanosine-37 in various tRNAs. The protein is tRNA (guanine-N(1)-)-methyltransferase of Burkholderia vietnamiensis (strain G4 / LMG 22486) (Burkholderia cepacia (strain R1808)).